The sequence spans 281 residues: Probable endonuclease 4 (281 aa).

Residues H69, H109, E145, D179, H182, H216, D229, H231, and E261 each coordinate Zn(2+).

Belongs to the AP endonuclease 2 family. Requires Zn(2+) as cofactor.

It carries out the reaction Endonucleolytic cleavage to 5'-phosphooligonucleotide end-products.. Endonuclease IV plays a role in DNA repair. It cleaves phosphodiester bonds at apurinic or apyrimidinic (AP) sites, generating a 3'-hydroxyl group and a 5'-terminal sugar phosphate. This chain is Probable endonuclease 4, found in Aeromonas hydrophila subsp. hydrophila (strain ATCC 7966 / DSM 30187 / BCRC 13018 / CCUG 14551 / JCM 1027 / KCTC 2358 / NCIMB 9240 / NCTC 8049).